Consider the following 290-residue polypeptide: Endoplasmic reticulum-Golgi intermediate compartment protein 1 (290 aa).

The Cytoplasmic segment spans residues 1 to 26 (MPFDFRRFDIYRKVPKDLTQPTYTGA). The chain crosses the membrane as a helical span at residues 27–47 (IISICCCLFILFLFLSELTGF). At 48–254 (ITTEVVNELY…RRQPLYRFIT (207 aa)) the chain is on the lumenal side. N-linked (GlcNAc...) asparagine glycosylation is present at asparagine 74. A helical transmembrane segment spans residues 255-275 (TICAIIGGTFTVAGILDSCIF). Topologically, residues 276–290 (TASEAWKKIQLGKIH) are cytoplasmic.

It belongs to the ERGIC family. May form a heteromeric complex composed of ERGIC1, ERGIC2 and ERGIC3. Within the complex, the interaction with ERGIC3 is direct. Interacts with ERGIC3/ERV46. N-glycosylated.

The protein resides in the endoplasmic reticulum membrane. Its subcellular location is the endoplasmic reticulum-Golgi intermediate compartment membrane. It is found in the golgi apparatus membrane. Its function is as follows. Possible role in transport between endoplasmic reticulum and Golgi. The polypeptide is Endoplasmic reticulum-Golgi intermediate compartment protein 1 (Ergic1) (Mus musculus (Mouse)).